The primary structure comprises 201 residues: Recombination protein RecR (201 aa).

The C4-type zinc finger occupies 60-75 (CSCCGNVDTSDPCTIC). Residues 83–178 (ATLIVVEDVS…RVTRLAHGVP (96 aa)) form the Toprim domain.

It belongs to the RecR family.

May play a role in DNA repair. It seems to be involved in an RecBC-independent recombinational process of DNA repair. It may act with RecF and RecO. In Brucella abortus biovar 1 (strain 9-941), this protein is Recombination protein RecR.